The chain runs to 203 residues: MSVEEKKRRLEELKDQNVVLGLAIQRSRLSVKRLKLEYGVLLERLESRIELDPELNCEDPLPTLASFKQELLTKPFRKSKTKRHKVKERDPNMPKRPTNAYLLYCEMNKERIRQNGSLDVTRDLAEGWKNLNEQDRKPYYKLYSEDRERYQMEMEIYNKKISNIDADDDKEENEQKIKNNEEGSSTKVADSKGGEDGSLVSSN.

Ser-2 carries the N-acetylserine modification. Disordered stretches follow at residues 78 to 97 and 161 to 203; these read KSKT…PKRP and ISNI…VSSN. Residues 94–158 constitute a DNA-binding region (HMG box); that stretch reads PKRPTNAYLL…RYQMEMEIYN (65 aa).

As to quaternary structure, component of the chromatin-remodeling INO80 complex, at least composed of ARP4, ARP5, ARP8, RVB1, RVB2, TAF14, NHP10, IES1, IES3, IES4, IES6, ACT1, IES2, IES5 and INO80.

Its subcellular location is the nucleus. In terms of biological role, probably involved in transcription regulation via its interaction with the INO80 complex, a chromatin remodeling complex. This chain is Non-histone protein 10 (NHP10), found in Saccharomyces cerevisiae (strain ATCC 204508 / S288c) (Baker's yeast).